Reading from the N-terminus, the 456-residue chain is Signal transduction histidine-protein kinase ArlS (456 aa).

2 helical membrane passes run 13–33 (LITTLITFTTILLFCLIIIFF) and 157–177 (IVALAFGLIATIITAGVSYIF). In terms of domain architecture, HAMP spans 179-232 (SQITKPIVTMSNKMNQIRRDGFQNKLELTTNYEETDNLIDTFNEMMYQIEESFN). The region spanning 240–456 (DASHELRTPL…TFKISFPVLN (217 aa)) is the Histidine kinase domain. Histidine 243 is subject to Phosphohistidine; by autocatalysis.

In terms of processing, autophosphorylated.

The protein resides in the cell membrane. The enzyme catalyses ATP + protein L-histidine = ADP + protein N-phospho-L-histidine.. In terms of biological role, member of the two-component regulatory system ArlS/ArlR. ArlS probably functions as a sensor protein kinase which is autophosphorylated at a histidine residue and transfers its phosphate group to ArlR. This Staphylococcus epidermidis (strain ATCC 12228 / FDA PCI 1200) protein is Signal transduction histidine-protein kinase ArlS (arlS).